We begin with the raw amino-acid sequence, 497 residues long: Glycerol kinase (497 aa).

Thr12 serves as a coordination point for ADP. 3 residues coordinate ATP: Thr12, Thr13, and Ser14. Thr12 contributes to the sn-glycerol 3-phosphate binding site. Arg16 is a binding site for ADP. Residues Arg82, Glu83, Tyr134, and Asp243 each coordinate sn-glycerol 3-phosphate. Residues Arg82, Glu83, Tyr134, Asp243, and Gln244 each contribute to the glycerol site. Residues Thr265 and Gly308 each contribute to the ADP site. ATP contacts are provided by Thr265, Gly308, Gln312, and Gly409. Positions 409 and 413 each coordinate ADP.

Belongs to the FGGY kinase family.

It catalyses the reaction glycerol + ATP = sn-glycerol 3-phosphate + ADP + H(+). Its pathway is polyol metabolism; glycerol degradation via glycerol kinase pathway; sn-glycerol 3-phosphate from glycerol: step 1/1. With respect to regulation, inhibited by fructose 1,6-bisphosphate (FBP). Key enzyme in the regulation of glycerol uptake and metabolism. Catalyzes the phosphorylation of glycerol to yield sn-glycerol 3-phosphate. This Solidesulfovibrio magneticus (strain ATCC 700980 / DSM 13731 / RS-1) (Desulfovibrio magneticus) protein is Glycerol kinase.